The chain runs to 456 residues: E3 ubiquitin-protein ligase PUB24 (456 aa).

The 75-residue stretch at 9-83 (EIPNYFICPI…QHWCVENETR (75 aa)) folds into the U-box domain.

In terms of processing, auto-ubiquitinated.

The catalysed reaction is S-ubiquitinyl-[E2 ubiquitin-conjugating enzyme]-L-cysteine + [acceptor protein]-L-lysine = [E2 ubiquitin-conjugating enzyme]-L-cysteine + N(6)-ubiquitinyl-[acceptor protein]-L-lysine.. Its pathway is protein modification; protein ubiquitination. Functionally, E3 ubiquitin-protein ligase that acts as a negative regulator of the immunity triggered by the pathogen-associated molecular patterns (PAMPs), in association with PUB22 and PUB23. This is E3 ubiquitin-protein ligase PUB24 (PUB24) from Arabidopsis thaliana (Mouse-ear cress).